Reading from the N-terminus, the 427-residue chain is Acetylornithine aminotransferase, mitochondrial (427 aa).

At lysine 279 the chain carries N6-(pyridoxal phosphate)lysine.

The protein belongs to the class-III pyridoxal-phosphate-dependent aminotransferase family. Requires pyridoxal 5'-phosphate as cofactor.

Its subcellular location is the mitochondrion matrix. It carries out the reaction N(2)-acetyl-L-ornithine + 2-oxoglutarate = N-acetyl-L-glutamate 5-semialdehyde + L-glutamate. Its pathway is amino-acid biosynthesis; L-arginine biosynthesis; N(2)-acetyl-L-ornithine from L-glutamate: step 4/4. This is Acetylornithine aminotransferase, mitochondrial (ARG8) from Candida glabrata (strain ATCC 2001 / BCRC 20586 / JCM 3761 / NBRC 0622 / NRRL Y-65 / CBS 138) (Yeast).